We begin with the raw amino-acid sequence, 66 residues long: Alpha-conotoxin-like Tx2 (66 aa).

The signal sequence occupies residues 1–21; sequence MGMRMMFTVFLLVVLATTVVS. The propeptide occupies 22–49; that stretch reads FTSGRRTFHGRNAAAKASGLVSLTDRRP. 2 cysteine pairs are disulfide-bonded: cysteine 51/cysteine 57 and cysteine 52/cysteine 65. The segment at 53–55 is ser-Xaa-Pro motif, crucial for potent interaction with nAChR; that stretch reads SHP.

This sequence belongs to the conotoxin A superfamily. Expressed by the venom duct.

It localises to the secreted. Functionally, alpha-conotoxins act on postsynaptic membranes, they bind to the nicotinic acetylcholine receptors (nAChR) and thus inhibit them. This chain is Alpha-conotoxin-like Tx2, found in Conus textile (Cloth-of-gold cone).